Reading from the N-terminus, the 849-residue chain is MSKLRKKYLEHLLCVLIFFTYVIGYGEAQSKSFLVDCGSNATTEVDGRTWVGDLSPNKSVTLQGFDAITASTSKGSSVYAEIYKTARVFDAVLNYTFEGITQGNYFVRLHFSPFAIENHNVNESSFSVFADGLRLMLDINIAGEIAHKNLILESTGHNATASSLVKEFLLPTGPGKLVLSFIPEKGSFGFVNAIEIVSVDDKLFKESVTKVGGSEVELGLGGRGIETMYRLNVGGPKLGPSKDLKLYRTWETDLSYMVIENAGVEVKNSSNITYALADDSPVAPLLVYETARMMSNTEVLEKRFNISWKFEVDPNFDYLVRLHFCELLVDKQNQRIFRIYINNQTAAGNFDIFAHAGGKNKGIYQDYLDPVSSKNDVLWIQLGPDSSVGASGDALLSGLEIFKLSKNGNLAHLIRFDSTGHSVSDSKMRIIWISVGAGIAIIIFFVFLGILVVCLCKKRRSKSDESKNNPPGWRPLFLHVNNSTANAKATGGSLRLNTLAASTMGRKFTLAEIRAATKNFDDGLAIGVGGFGKVYRGELEDGTLIAIKRATPHSQQGLAEFETEIVMLSRLRHRHLVSLIGFCDEHNEMILVYEYMANGTLRSHLFGSNLPPLSWKQRLEACIGSARGLHYLHTGSERGIIHRDVKTTNILLDENFVAKMSDFGLSKAGPSMDHTHVSTAVKGSFGYLDPEYFRRQQLTEKSDVYSFGVVLFEAVCARAVINPTLPKDQINLAEWALSWQKQRNLESIIDSNLRGNYSPESLEKYGEIAEKCLADEGKNRPMMGEVLWSLEYVLQIHEAWLRKQNGENSFSSSQAVEEAPESFTLPACSNQDSSETEQSQTGSALHNSA.

The N-terminal stretch at 1–28 (MSKLRKKYLEHLLCVLIFFTYVIGYGEA) is a signal peptide. The Extracellular portion of the chain corresponds to 29 to 429 (QSKSFLVDCG…GHSVSDSKMR (401 aa)). 9 N-linked (GlcNAc...) asparagine glycosylation sites follow: Asn-40, Asn-57, Asn-94, Asn-122, Asn-158, Asn-268, Asn-271, Asn-305, and Asn-343. The chain crosses the membrane as a helical span at residues 430–450 (IIWISVGAGIAIIIFFVFLGI). The Cytoplasmic portion of the chain corresponds to 451–849 (LVVCLCKKRR…QTGSALHNSA (399 aa)). The Protein kinase domain maps to 520 to 793 (FDDGLAIGVG…GEVLWSLEYV (274 aa)). Residues 526 to 534 (IGVGGFGKV) and Lys-548 contribute to the ATP site. Asp-644 acts as the Proton acceptor in catalysis. The disordered stretch occupies residues 810 to 849 (FSSSQAVEEAPESFTLPACSNQDSSETEQSQTGSALHNSA). Polar residues predominate over residues 827-849 (ACSNQDSSETEQSQTGSALHNSA).

The protein belongs to the protein kinase superfamily. Ser/Thr protein kinase family.

Its subcellular location is the cell membrane. The sequence is that of Probable receptor-like protein kinase At1g30570 from Arabidopsis thaliana (Mouse-ear cress).